Reading from the N-terminus, the 945-residue chain is MLDKYSPAEIESKHYQNWEEQGYFQPDMDLTKPSFSIQLPPPNVTGTLHMGHAFNQTIMDGLTRYYRMKGCNTAWIPGTDHAGIATQIVVERQLAAQNVSRHDLGREKFLEKVWEWKEVSGGTITQQMRRVGCSADWTREYFTMDDVRAETVTEVFVRLYEQGLIYRGKRLVNWDPVLGTAVSDLEVESVEEQGSMWHIRYPLADNPAEAVIVATTRPETLLGDVAVAVNPEDERYTHLIGKELILPLTGRTIPVIADEYVEKDFGTGCVKITPAHDFNDYEVGKRHDTRLVNVFDLEAKVLANAEVFNFKGEAQPSFALPEKYAGLDRFAARKQMVADLQEQGFLVEIKAHTLMTPKGDRTGSVIEPMLTSQWFVAMSATPNGGEPDSEFKGLSLADKAKKAVDSGAVRFIPENWVNTYNQWMNNIQDWCISRQLWWGHQIPAWYDNEGNVYVARNQEEAEKQAGKTGLTREEDVLDTWFSSALVPFSTLGWPSETDELKAFLPSNVLVTGYEIIFFWVARMIMMTTHFTGKVPFKDVYIHGIVRDHEGKKMSKSEGNVIDPVDLIDGIDLEKLLVKRTTGLRKPETAPKVEEASRKLFPEGIPSMGADALRFTMASYASLGRSVNFDFKRAEGYRNFCNKIWNATNFVLMNTENQDCGYGATATEPRGYSFPDMWIVDRLNQTIEQVTQAYETYRFDLAAETLYSFMWNDYCDWYLELAKVQLQTGCASRQRATRHTLLRVLEAALRLLHPIIPFITEELWQTVAPMCDAKTADSIMLARFPEADSGEIVQTAFEQMTVLQDLIGAVRNLRGEMGIQPNVKAPLFVESTDDLADYLKYLPMMTRLTEAQQVATLPESEDAPVAVCNGARLMLKVEIDKATETARLSKEAEKLQKALDKLNAKLSKPGYTEKAPAHLVEKDKADLAELEDKMAKVQTQLSKLKD.

Positions 42 to 52 (PNVTGTLHMGH) match the 'HIGH' region motif. A 'KMSKS' region motif is present at residues 552–556 (KMSKS). Lysine 555 serves as a coordination point for ATP. Positions 879–945 (DKATETARLS…VQTQLSKLKD (67 aa)) form a coiled coil.

This sequence belongs to the class-I aminoacyl-tRNA synthetase family. ValS type 1 subfamily. Monomer.

It localises to the cytoplasm. The catalysed reaction is tRNA(Val) + L-valine + ATP = L-valyl-tRNA(Val) + AMP + diphosphate. In terms of biological role, catalyzes the attachment of valine to tRNA(Val). As ValRS can inadvertently accommodate and process structurally similar amino acids such as threonine, to avoid such errors, it has a 'posttransfer' editing activity that hydrolyzes mischarged Thr-tRNA(Val) in a tRNA-dependent manner. The polypeptide is Valine--tRNA ligase (Neisseria meningitidis serogroup A / serotype 4A (strain DSM 15465 / Z2491)).